The primary structure comprises 569 residues: Small ribosomal subunit protein bS1 (569 aa).

S1 motif domains lie at 52-116 (GAIL…LSRE), 134-199 (GSIV…VSRR), 220-288 (GERR…LGLK), 305-375 (GKRV…LGLK), 392-462 (GLRV…LGVK), and 479-548 (GSDI…LSIK).

It belongs to the bacterial ribosomal protein bS1 family.

Binds mRNA; thus facilitating recognition of the initiation point. It is needed to translate mRNA with a short Shine-Dalgarno (SD) purine-rich sequence. This Chlamydia trachomatis serovar D (strain ATCC VR-885 / DSM 19411 / UW-3/Cx) protein is Small ribosomal subunit protein bS1 (rpsA).